The primary structure comprises 844 residues: Eukaryotic translation elongation factor 2 (844 aa).

A tr-type G domain is found at 17 to 348; the sequence is RNIRNMSVIA…MIAIHLPSPV (332 aa). Residue 26–33 coordinates GTP; the sequence is AHVDHGKS. A phosphothreonine mark is found at Thr-57 and Thr-59. GTP contacts are provided by residues 162-165 and 219-221; these read NKMD and SGL. At His-701 the chain carries Diphthamide.

This sequence belongs to the TRAFAC class translation factor GTPase superfamily. Classic translation factor GTPase family. EF-G/EF-2 subfamily. Phosphorylation by EF-2 kinase completely inactivates eEF2.

The protein resides in the cytoplasm. The catalysed reaction is GTP + H2O = GDP + phosphate + H(+). In terms of biological role, catalyzes the GTP-dependent ribosomal translocation step during translation elongation. During this step, the ribosome changes from the pre-translocational (PRE) to the post-translocational (POST) state as the newly formed A-site-bound peptidyl-tRNA and P-site-bound deacylated tRNA move to the P and E sites, respectively. Catalyzes the coordinated movement of the two tRNA molecules, the mRNA and conformational changes in the ribosome. The sequence is that of Eukaryotic translation elongation factor 2 from Drosophila melanogaster (Fruit fly).